A 668-amino-acid chain; its full sequence is DNA ligase (668 aa).

NAD(+)-binding positions include 32-36 (DVEYD), 81-82 (SL), and Glu111. Lys113 serves as the catalytic N6-AMP-lysine intermediate. NAD(+) contacts are provided by Arg134, Glu171, Lys290, and Lys314. Zn(2+) is bound by residues Cys408, Cys411, Cys426, and Cys432. Residues 591-668 (EEDLSLKGQT…DEEALIAILS (78 aa)) form the BRCT domain.

Belongs to the NAD-dependent DNA ligase family. LigA subfamily. Mg(2+) is required as a cofactor. The cofactor is Mn(2+).

It carries out the reaction NAD(+) + (deoxyribonucleotide)n-3'-hydroxyl + 5'-phospho-(deoxyribonucleotide)m = (deoxyribonucleotide)n+m + AMP + beta-nicotinamide D-nucleotide.. Its function is as follows. DNA ligase that catalyzes the formation of phosphodiester linkages between 5'-phosphoryl and 3'-hydroxyl groups in double-stranded DNA using NAD as a coenzyme and as the energy source for the reaction. It is essential for DNA replication and repair of damaged DNA. This is DNA ligase from Shewanella piezotolerans (strain WP3 / JCM 13877).